We begin with the raw amino-acid sequence, 212 residues long: Large ribosomal subunit protein uL3 (212 aa).

Q152 is modified (N5-methylglutamine).

The protein belongs to the universal ribosomal protein uL3 family. Part of the 50S ribosomal subunit. Forms a cluster with proteins L14 and L19. Post-translationally, methylated by PrmB.

Its function is as follows. One of the primary rRNA binding proteins, it binds directly near the 3'-end of the 23S rRNA, where it nucleates assembly of the 50S subunit. This chain is Large ribosomal subunit protein uL3, found in Marinomonas sp. (strain MWYL1).